The chain runs to 367 residues: Histidinol-phosphate aminotransferase 1 (367 aa).

At Lys-226 the chain carries N6-(pyridoxal phosphate)lysine.

The protein belongs to the class-II pyridoxal-phosphate-dependent aminotransferase family. Histidinol-phosphate aminotransferase subfamily. Homodimer. Requires pyridoxal 5'-phosphate as cofactor.

The enzyme catalyses L-histidinol phosphate + 2-oxoglutarate = 3-(imidazol-4-yl)-2-oxopropyl phosphate + L-glutamate. It participates in amino-acid biosynthesis; L-histidine biosynthesis; L-histidine from 5-phospho-alpha-D-ribose 1-diphosphate: step 7/9. In Haemophilus influenzae (strain ATCC 51907 / DSM 11121 / KW20 / Rd), this protein is Histidinol-phosphate aminotransferase 1 (hisC1).